Reading from the N-terminus, the 405-residue chain is Exodeoxyribonuclease 7 large subunit (405 aa).

This sequence belongs to the XseA family. Heterooligomer composed of large and small subunits.

The protein resides in the cytoplasm. It carries out the reaction Exonucleolytic cleavage in either 5'- to 3'- or 3'- to 5'-direction to yield nucleoside 5'-phosphates.. Functionally, bidirectionally degrades single-stranded DNA into large acid-insoluble oligonucleotides, which are then degraded further into small acid-soluble oligonucleotides. The polypeptide is Exodeoxyribonuclease 7 large subunit (Halothermothrix orenii (strain H 168 / OCM 544 / DSM 9562)).